A 32-amino-acid polypeptide reads, in one-letter code: GTATCETQRLANFLAPSSNKLGAIFSPTKMGS.

It belongs to the calcitonin family. As to quaternary structure, can form homodimers. Interacts with IDE and INS. Interaction with INS inhibits homodimerization and fibril formation.

Its subcellular location is the secreted. In terms of biological role, amylin/IAPP is a glucoregulatory peptide hormone that plays an important role in the regulation of energy homeostasis. Selectively inhibits insulin-stimulated glucose utilization and glycogen deposition in muscle, while not affecting adipocyte glucose metabolism. IAPP function is mediated by the CALCR-RAMPs (AMYRs) receptor complexes. Amylin can also bind CALCR receptor in the absence of RAMPs, although it is more selective for AMYRs. This Ovis aries (Sheep) protein is Islet amyloid polypeptide (IAPP).